The sequence spans 518 residues: Glutamate--cysteine ligase (518 aa).

It belongs to the glutamate--cysteine ligase type 1 family. Type 1 subfamily.

It catalyses the reaction L-cysteine + L-glutamate + ATP = gamma-L-glutamyl-L-cysteine + ADP + phosphate + H(+). Its pathway is sulfur metabolism; glutathione biosynthesis; glutathione from L-cysteine and L-glutamate: step 1/2. The sequence is that of Glutamate--cysteine ligase from Escherichia coli O157:H7.